Consider the following 35-residue polypeptide: uncharacterized protein (35 aa).

Residues Met1–Ala25 form the signal peptide.

This is an uncharacterized protein from Saccharomyces cerevisiae (strain ATCC 204508 / S288c) (Baker's yeast).